Consider the following 151-residue polypeptide: Ribonuclease H (151 aa).

The RNase H type-1 domain maps to 1–141 (MKNVIIYTDG…ADALANRGID (141 aa)). Mg(2+) contacts are provided by aspartate 9, glutamate 47, aspartate 69, and aspartate 133.

It belongs to the RNase H family. As to quaternary structure, monomer. Mg(2+) is required as a cofactor.

It localises to the cytoplasm. It catalyses the reaction Endonucleolytic cleavage to 5'-phosphomonoester.. Functionally, endonuclease that specifically degrades the RNA of RNA-DNA hybrids. The chain is Ribonuclease H from Alcanivorax borkumensis (strain ATCC 700651 / DSM 11573 / NCIMB 13689 / SK2).